Reading from the N-terminus, the 946-residue chain is Villin-4 (946 aa).

Gelsolin-like repeat units lie at residues Asn28 to Lys109, Val152 to Lys219, Leu274 to Phe339, and Glu641 to Phe715. Disordered regions lie at residues Ala744–Arg783 and Thr846–Asp902. The span at Gln765–His777 shows a compositional bias: polar residues. Over residues Ser874–Asn883 the composition is skewed to acidic residues. Residues Asp881–Phe946 enclose the HP domain.

It belongs to the villin/gelsolin family.

It is found in the cytoplasm. Its subcellular location is the cytoskeleton. In terms of biological role, ca(2+)-regulated actin-binding protein. Binds actin microfilaments (MFs). Involved in actin filament bundling, severing and capping. Caps the barbed end of actin filaments and is able to sever them in a calcium-dependent manner. This Oryza sativa subsp. indica (Rice) protein is Villin-4.